Here is a 145-residue protein sequence, read N- to C-terminus: Large ribosomal subunit protein bL19 (145 aa).

The span at 114–136 (IAEKMESPAAKATREAAKKEAKA) shows a compositional bias: basic and acidic residues. Residues 114–145 (IAEKMESPAAKATREAAKKEAKAAKKNAAPAE) are disordered.

It belongs to the bacterial ribosomal protein bL19 family.

Functionally, this protein is located at the 30S-50S ribosomal subunit interface and may play a role in the structure and function of the aminoacyl-tRNA binding site. This is Large ribosomal subunit protein bL19 from Methylocella silvestris (strain DSM 15510 / CIP 108128 / LMG 27833 / NCIMB 13906 / BL2).